Reading from the N-terminus, the 64-residue chain is UPF0337 protein SAB0772 (64 aa).

Positions 1–40 (MADESKFEQAKGNVKETIGNVTDNKNLENEGKEDKASGKA) are disordered. Residues 25–40 (KNLENEGKEDKASGKA) show a composition bias toward basic and acidic residues.

The protein belongs to the UPF0337 (CsbD) family.

The protein is UPF0337 protein SAB0772 of Staphylococcus aureus (strain bovine RF122 / ET3-1).